The chain runs to 379 residues: Structure-specific endonuclease subunit EME2 (379 aa).

Residues 1 to 55 (MARVGPGRAGVSCQGRGRGRGGSGQRRPPTWEISDSDAEDSAGSEAAARARDPAG) form a disordered region. The tract at residues 50–266 (ARDPAGERRA…YPLKQYRESQ (217 aa)) is nuclease-like domain; forms the post-nick DNA binding interface and is involved in DNA recognition and bending. The helix-hairpin-helix (2HhH); forms the pre-nick DNA binding interface and is involved in DNA recognition and bending stretch occupies residues 288–379 (GLQAAWRRQI…NPDLLLDLGS (92 aa)).

Belongs to the EME1/MMS4 family. Part of the heterodimeric MUS81-EME2 complex; the complex forms specifically during the DNA replication phase of the cell cycle.

The protein resides in the nucleus. Functionally, non-catalytic subunit of the structure-specific, heterodimeric DNA endonuclease MUS81-EME2 which is involved in the maintenance of genome stability. In the complex, EME2 is required for DNA cleavage, participating in DNA recognition and bending. MUS81-EME2 cleaves 3'-flaps and nicked Holliday junctions, and exhibit limited endonuclease activity with 5' flaps and nicked double-stranded DNAs. MUS81-EME2 which is active during the replication of DNA is more specifically involved in replication fork processing. Replication forks frequently encounter obstacles to their passage, including DNA base lesions, DNA interstrand cross-links, difficult-to-replicate sequences, transcription bubbles, or tightly bound proteins. One mechanism for the restart of a stalled replication fork involves nucleolytic cleavage mediated by the MUS81-EME2 endonuclease. By acting upon the stalled fork, MUS81-EME2 generates a DNA double-strand break (DSB) that can be repaired by homologous recombination, leading to the restoration of an active fork. MUS81-EME2 could also function in telomere maintenance. The chain is Structure-specific endonuclease subunit EME2 from Homo sapiens (Human).